The primary structure comprises 502 residues: N-sulphoglucosamine sulphohydrolase (502 aa).

Positions 1–20 (MSCPVPACCALLLVLGLCRA) are cleaved as a signal peptide. Residues Asp31 and Asp32 each coordinate Ca(2+). Residue Asn41 is glycosylated (N-linked (GlcNAc...) asparagine). Cys70 provides a ligand contact to Ca(2+). The Nucleophile role is filled by Cys70. Cys70 carries the post-translational modification 3-oxoalanine (Cys). Residues Asn142 and Asn151 are each glycosylated (N-linked (GlcNAc...) asparagine). Cys183 and Cys194 are oxidised to a cystine. A glycan (N-linked (GlcNAc...) asparagine) is linked at Asn264. Ca(2+)-binding residues include Asp273 and Asn274. The N-linked (GlcNAc...) asparagine glycan is linked to Asn413. Cys481 and Cys495 are disulfide-bonded.

It belongs to the sulfatase family. Ca(2+) is required as a cofactor. Post-translationally, the conversion to 3-oxoalanine (also known as C-formylglycine, FGly), of a serine or cysteine residue in prokaryotes and of a cysteine residue in eukaryotes, is critical for catalytic activity.

It localises to the lysosome. The catalysed reaction is N-sulfo-D-glucosamine + H2O = D-glucosamine + sulfate. Catalyzes a step in lysosomal heparan sulfate degradation. This is N-sulphoglucosamine sulphohydrolase (SGSH) from Homo sapiens (Human).